A 411-amino-acid polypeptide reads, in one-letter code: Acetate kinase (411 aa).

Mg(2+) is bound at residue asparagine 7. Lysine 14 is an ATP binding site. Arginine 94 lines the substrate pocket. Aspartate 151 functions as the Proton donor/acceptor in the catalytic mechanism. ATP is bound by residues 211–215, 285–287, and 333–337; these read HLGNG, DMR, and GIGEN. Position 387 (glutamate 387) interacts with Mg(2+).

It belongs to the acetokinase family. As to quaternary structure, homodimer. Mg(2+) serves as cofactor. Mn(2+) is required as a cofactor.

The protein localises to the cytoplasm. The enzyme catalyses acetate + ATP = acetyl phosphate + ADP. It participates in metabolic intermediate biosynthesis; acetyl-CoA biosynthesis; acetyl-CoA from acetate: step 1/2. Its function is as follows. Catalyzes the formation of acetyl phosphate from acetate and ATP. Can also catalyze the reverse reaction. The protein is Acetate kinase of Syntrophobacter fumaroxidans (strain DSM 10017 / MPOB).